The chain runs to 348 residues: Cyclic AMP-dependent transcription factor ATF-4 (348 aa).

Lys-53 is covalently cross-linked (Glycyl lysine isopeptide (Lys-Gly) (interchain with G-Cter in SUMO2)). Disordered regions lie at residues 151–174 (QGAP…TPDH) and 187–265 (PEGD…GEKM). Residues Ser-211, Ser-215, Ser-220, Ser-227, and Ser-231 each carry the phosphoserine modification. The short motif at 211 to 220 (SDNDSGICMS) is the BetaTrCP degron motif element. Positions 221–241 (PDSSLGSPQDSPSTSRGSPNK) are enriched in polar residues. Pro-232 is subject to 4-hydroxyproline. 2 positions are modified to phosphoserine: Ser-242 and Ser-245. The span at 242–253 (SLLSPGALSGSS) shows a compositional bias: low complexity. Glycyl lysine isopeptide (Lys-Gly) (interchain with G-Cter in SUMO2) cross-links involve residues Lys-256, Lys-264, and Lys-269. Residues 275-338 (LDKKLKKMEQ…QYLKDQIEEV (64 aa)) enclose the bZIP domain. Residues 277-297 (KKLKKMEQNKTAATRYRQKKR) form a basic motif region. The tract at residues 302–338 (ALTGECKELEKKNEALKEKADSLAKEIQYLKDQIEEV) is interaction with GABBR1. The interval 303-331 (LTGECKELEKKNEALKEKADSLAKEIQYL) is leucine-zipper. Lys-308 carries the N6-acetyllysine modification.

The protein belongs to the bZIP family. In terms of assembly, binds DNA as a homodimer and as a heterodimer. Heterodimer; heterodimerizes with CEBPB. Heterodimer; heterodimerizes with DDIT3/CHOP. Interacts with CEP290 (via an N-terminal region). Interacts with NEK6, DAPK2 (isoform 2) and ZIPK/DAPK3. Interacts (via its leucine zipper domain) with GABBR1 and GABBR2 (via their C-termini). Forms a heterodimer with TXLNG in osteoblasts. Interacts (via its DNA binding domain) with FOXO1 (C-terminal half); the interaction occurs in osteoblasts and regulates glucose homeostasis through suppression of beta-cell proliferation and a decrease in insulin production. Interacts with SATB2; the interaction results in enhanced DNA binding and transactivation by these transcription factors. Interacts with ABRAXAS2. Interacts with TRIB3, inhibiting the transactivation activity of ATF4. Interacts with DISC1; which inhibits ATF4 transcription factor activity by disrupting ATF4 dimerization and DNA-binding. Interacts with EP300/p300; EP300/p300 stabilizes ATF4 and increases its transcriptional activity independently of its catalytic activity by preventing its ubiquitination. In terms of processing, ubiquitinated by SCF(BTRC) in response to mTORC1 signal, followed by proteasomal degradation and leading to down-regulate expression of SIRT4. Interaction with EP300/p300 inhibits ubiquitination by SCF(BTRC). Post-translationally, phosphorylation at Ser-242 by RPS6KA3/RSK2 in osteoblasts enhances transactivation activity and promotes osteoblast differentiation. Phosphorylated on the betaTrCP degron motif at Ser-215, followed by phosphorylation at Ser-220, Ser-227, Ser-231 and Ser-245, promoting interaction with BTRC and ubiquitination. Phosphorylation is promoted by mTORC1. Phosphorylation at Ser-211 by CK2 decreases its stability. Phosphorylated by NEK6. Hydroxylated by PHD3, leading to decreased protein stability.

It is found in the nucleus. The protein localises to the nucleus speckle. Its subcellular location is the cytoplasm. It localises to the cell membrane. The protein resides in the cytoskeleton. It is found in the microtubule organizing center. The protein localises to the centrosome. In terms of biological role, transcription factor that binds the cAMP response element (CRE) (consensus: 5'-GTGACGT[AC][AG]-3') and displays two biological functions, as regulator of metabolic and redox processes under normal cellular conditions, and as master transcription factor during integrated stress response (ISR). Binds to asymmetric CRE's as a heterodimer and to palindromic CRE's as a homodimer. Core effector of the ISR, which is required for adaptation to various stress such as endoplasmic reticulum (ER) stress, amino acid starvation, mitochondrial stress or oxidative stress. During ISR, ATF4 translation is induced via an alternative ribosome translation re-initiation mechanism in response to EIF2S1/eIF-2-alpha phosphorylation, and stress-induced ATF4 acts as a master transcription factor of stress-responsive genes in order to promote cell recovery. Promotes the transcription of genes linked to amino acid sufficiency and resistance to oxidative stress to protect cells against metabolic consequences of ER oxidation. Activates the transcription of NLRP1, possibly in concert with other factors in response to ER stress. Activates the transcription of asparagine synthetase (ASNS) in response to amino acid deprivation or ER stress. However, when associated with DDIT3/CHOP, the transcriptional activation of the ASNS gene is inhibited in response to amino acid deprivation. Together with DDIT3/CHOP, mediates programmed cell death by promoting the expression of genes involved in cellular amino acid metabolic processes, mRNA translation and the terminal unfolded protein response (terminal UPR), a cellular response that elicits programmed cell death when ER stress is prolonged and unresolved. Activates the expression of COX7A2L/SCAF1 downstream of the EIF2AK3/PERK-mediated unfolded protein response, thereby promoting formation of respiratory chain supercomplexes and increasing mitochondrial oxidative phosphorylation. Together with DDIT3/CHOP, activates the transcription of the IRS-regulator TRIB3 and promotes ER stress-induced neuronal cell death by regulating the expression of BBC3/PUMA in response to ER stress. May cooperate with the UPR transcriptional regulator QRICH1 to regulate ER protein homeostasis which is critical for cell viability in response to ER stress. In the absence of stress, ATF4 translation is at low levels and it is required for normal metabolic processes such as embryonic lens formation, fetal liver hematopoiesis, bone development and synaptic plasticity. Acts as a regulator of osteoblast differentiation in response to phosphorylation by RPS6KA3/RSK2: phosphorylation in osteoblasts enhances transactivation activity and promotes expression of osteoblast-specific genes and post-transcriptionally regulates the synthesis of Type I collagen, the main constituent of the bone matrix. Cooperates with FOXO1 in osteoblasts to regulate glucose homeostasis through suppression of beta-cell production and decrease in insulin production. Activates transcription of SIRT4. Regulates the circadian expression of the core clock component PER2 and the serotonin transporter SLC6A4. Binds in a circadian time-dependent manner to the cAMP response elements (CRE) in the SLC6A4 and PER2 promoters and periodically activates the transcription of these genes. Mainly acts as a transcriptional activator in cellular stress adaptation, but it can also act as a transcriptional repressor: acts as a regulator of synaptic plasticity by repressing transcription, thereby inhibiting induction and maintenance of long-term memory. Regulates synaptic functions via interaction with DISC1 in neurons, which inhibits ATF4 transcription factor activity by disrupting ATF4 dimerization and DNA-binding. The protein is Cyclic AMP-dependent transcription factor ATF-4 of Bos taurus (Bovine).